Here is a 364-residue protein sequence, read N- to C-terminus: MKPSVIEILQKLLTYPSITPKECGIFDYVRSLLEGFEAIEVEHEGVKNLLLYRCFGEGEHWCLAGHIDVVPPGEGWSVDPFGAELKEGYLYGRGAQDMKSGVAAMISALAKIDHFPGTLSLLLTSDEEGEAKWGTQLMLEHLKERGFLPKVAIVTEPTSEERFGDTIKVGRRGSINGKLIIHGKQGHVAYPSKCLNPVELIAPRLAQIAGYNLDAGDEFFEPSKLVITDIRGGIEAVNVTPSDLKILFNVRHSTQTSAKEIEDYLHQLLQGIPYTLEIKPSSKPFLTSRESVVVKRVSEAVKRVMGVAPKLSTGGGTSDARYFAQFGVEVVECGVVNDRIHALDERVALLEVEALERVLLEALG.

H66 contacts Zn(2+). D68 is an active-site residue. Residue D97 coordinates Zn(2+). The active-site Proton acceptor is the E127. Residues E128, E156, and H341 each coordinate Zn(2+).

This sequence belongs to the peptidase M20A family. DapE subfamily. In terms of assembly, homodimer. It depends on Zn(2+) as a cofactor. Co(2+) is required as a cofactor.

It catalyses the reaction N-succinyl-(2S,6S)-2,6-diaminopimelate + H2O = (2S,6S)-2,6-diaminopimelate + succinate. It participates in amino-acid biosynthesis; L-lysine biosynthesis via DAP pathway; LL-2,6-diaminopimelate from (S)-tetrahydrodipicolinate (succinylase route): step 3/3. Its function is as follows. Catalyzes the hydrolysis of N-succinyl-L,L-diaminopimelic acid (SDAP), forming succinate and LL-2,6-diaminopimelate (DAP), an intermediate involved in the bacterial biosynthesis of lysine and meso-diaminopimelic acid, an essential component of bacterial cell walls. The polypeptide is Succinyl-diaminopimelate desuccinylase (Wolinella succinogenes (strain ATCC 29543 / DSM 1740 / CCUG 13145 / JCM 31913 / LMG 7466 / NCTC 11488 / FDC 602W) (Vibrio succinogenes)).